Reading from the N-terminus, the 197-residue chain is Large ribosomal subunit protein uL11 (197 aa).

Belongs to the universal ribosomal protein uL11 family. Part of the ribosomal stalk of the 50S ribosomal subunit. Interacts with L10 and the large rRNA to form the base of the stalk. L10 forms an elongated spine to which L12 dimers bind in a sequential fashion forming a multimeric L10(L12)X complex. Post-translationally, one or more lysine residues are methylated.

In terms of biological role, forms part of the ribosomal stalk which helps the ribosome interact with GTP-bound translation factors. This Mycoplasma mobile (strain ATCC 43663 / 163K / NCTC 11711) (Mesomycoplasma mobile) protein is Large ribosomal subunit protein uL11.